Consider the following 510-residue polypeptide: NAD(P)H-quinone oxidoreductase subunit 2 A, chloroplastic (510 aa).

The next 13 helical transmembrane spans lie at L24–L44, I57–F77, I99–I119, M124–C144, L149–Y169, Y183–G203, P227–A247, W295–I315, M323–D343, Y354–L374, A395–F415, L418–L438, and M484–I504.

The protein belongs to the complex I subunit 2 family. As to quaternary structure, NDH is composed of at least 16 different subunits, 5 of which are encoded in the nucleus.

Its subcellular location is the plastid. The protein resides in the chloroplast thylakoid membrane. It catalyses the reaction a plastoquinone + NADH + (n+1) H(+)(in) = a plastoquinol + NAD(+) + n H(+)(out). It carries out the reaction a plastoquinone + NADPH + (n+1) H(+)(in) = a plastoquinol + NADP(+) + n H(+)(out). NDH shuttles electrons from NAD(P)H:plastoquinone, via FMN and iron-sulfur (Fe-S) centers, to quinones in the photosynthetic chain and possibly in a chloroplast respiratory chain. The immediate electron acceptor for the enzyme in this species is believed to be plastoquinone. Couples the redox reaction to proton translocation, and thus conserves the redox energy in a proton gradient. The chain is NAD(P)H-quinone oxidoreductase subunit 2 A, chloroplastic from Vitis vinifera (Grape).